A 263-amino-acid chain; its full sequence is Meiotic drive suppressor wtf6 (263 aa).

The interval M1–D68 is disordered. Basic and acidic residues predominate over residues K19–P30. A run of 3 helical transmembrane segments spans residues F73 to C93, W110 to F130, and S201 to V221.

It belongs to the WTF family. As to quaternary structure, homomer. Interacts with other proteins that exhibit high sequence similarity.

The protein resides in the spore membrane. It is found in the vacuole membrane. In terms of biological role, acts as a suppressor component of the dual wtf meiotic drive system, and can suppress but not confer meiotic drive by compatible poisons. Wtf meiotic drive systems promote unequal transmission of alleles from the parental zygote to progeny spores by encoding a poison and an antidote from the same locus; the poison is trans-acting and forms toxic aggregates in all spores within an ascus, wherease the antidote is spore-specific and targets aggregates for degradation by the vacuole. Meiotic drive by wtf systems therefore lead to poisoning of all progeny that do not inherit the dual poison/antidote allele, or express a compatible antidote. This is Meiotic drive suppressor wtf6 from Schizosaccharomyces kambucha (Fission yeast).